The primary structure comprises 189 residues: Ras-like protein rasG (189 aa).

10 to 17 lines the GTP pocket; sequence GGGGVGKS. The Effector region signature appears at 32 to 40; sequence YDPTIEDSY. Residues 57–61 and 116–119 contribute to the GTP site; these read DTAGQ and NKCD. The disordered stretch occupies residues 169–189; the sequence is KGDSKPEKGKKKRPLKACTLL. At Cys-186 the chain carries Cysteine methyl ester. Cys-186 carries S-geranylgeranyl cysteine lipidation. Positions 187-189 are cleaved as a propeptide — removed in mature form; that stretch reads TLL.

The protein belongs to the small GTPase superfamily. Ras family. Interacts with ripA.

The protein resides in the cell membrane. The catalysed reaction is GTP + H2O = GDP + phosphate + H(+). Alternates between an inactive form bound to GDP and an active form bound to GTP. Activated by a guanine nucleotide-exchange factor (GEF) and inactivated by a GTPase-activating protein (GAP). Ras proteins bind GDP/GTP and possess intrinsic GTPase activity. This chain is Ras-like protein rasG (rasG), found in Dictyostelium discoideum (Social amoeba).